A 206-amino-acid polypeptide reads, in one-letter code: Probable GTP-binding protein EngB (206 aa).

The EngB-type G domain occupies Ser27 to Lys201. GTP contacts are provided by residues Gly35 to Ser42, Gly62 to Leu66, Asp80 to Gly83, Thr147 to Asp150, and Phe180 to Ser182. Positions 42 and 64 each coordinate Mg(2+).

Belongs to the TRAFAC class TrmE-Era-EngA-EngB-Septin-like GTPase superfamily. EngB GTPase family. Mg(2+) serves as cofactor.

Functionally, necessary for normal cell division and for the maintenance of normal septation. This Idiomarina loihiensis (strain ATCC BAA-735 / DSM 15497 / L2-TR) protein is Probable GTP-binding protein EngB.